Consider the following 330-residue polypeptide: ATP-dependent Clp protease proteolytic subunit-related protein 3, chloroplastic (330 aa).

The transit peptide at 1–43 (MASCLQASMNSLLPRSSSFSPHPPLSSNSSGRRNLKTFRYAFR) directs the protein to the chloroplast. Residues 7–32 (ASMNSLLPRSSSFSPHPPLSSNSSGR) form a disordered region. The span at 8–30 (SMNSLLPRSSSFSPHPPLSSNSS) shows a compositional bias: low complexity.

This sequence belongs to the peptidase S14 family. As to quaternary structure, component of the chloroplastic Clp protease core complex which consist of at least 16 proteins: CLPP4 (3 copies), CLPP5 (3 copies), CLPR4 (2 copies), ClpP1 (1 copy), CLPP6 (1 copy), CLPR2 (1 copy), CLPT1 (1 copy), CLPT2 (1 copy) and 3 copies of CLPP3 and/or CLPR1 and/or CLPR3. The core complex is organized in two heptameric rings, one containing CLPP3,4,5,6 in a 1:2:3:1 ratio and the other CLPP1 and CLPR1,2,3,4 in a 3:1:1:1:1 ratio.

Its subcellular location is the plastid. The protein resides in the chloroplast. In Arabidopsis thaliana (Mouse-ear cress), this protein is ATP-dependent Clp protease proteolytic subunit-related protein 3, chloroplastic.